The following is a 590-amino-acid chain: MATIEEIAHQIIDQQMGEIVTEQQTGQKIQIVTALDHSTQGKQFILANHEGSTPGKVFLTTPDAAGVNQLFFTSPDLSAPHLQLLTEKSPDQGPNKVFDLCVVCGDKASGRHYGAITCEGCKGFFKRSIRKNLVYSCRGSKDCVINKHHRNRCQYCRLQRCIAFGMKQDSVQCERKPIEVSREKSSNCAASTEKIYIRKDLRSPLAATPTFVTDSETARSAGLLDSGMFVNIHPSGIKTEPAMLMAPDKAESCQGDLSTLASVVTSLANLGKAKDLSHCGGDMPVVQSLRNGDTSFGAFHHDIQTNGDVSRAFDTLAKALTPGESSACQSPEEGMEGSPHLIAGEPSFVEKEGPLLSESHVAFRLTMPSPMPEYLNVHYIGESASRLLFLSMHWALSIPSFQALGQENSISLVKAYWNELFTLGLAQCWQVMNVATILATFVNCLHSSLQQDKMSPERRKSLMEHIFKLQEFCNSMVKLCIDGHEYAYLKAIVLFSPDHPGLENMELIERFQEKAYVEFQDYITRTYPDDTYRLSRLLLRLPALRLMNATITEELFFKGLIGNVRIDSVIPHILKMEPADYNSQIIGHSL.

Residues 1–166 form a required for interaction with KAT2B region; it reads MATIEEIAHQ…RLQRCIAFGM (166 aa). The nuclear receptor DNA-binding region spans 98-173; sequence FDLCVVCGDK…FGMKQDSVQC (76 aa). 2 NR C4-type zinc fingers span residues 101–121 and 137–156; these read CVVCGDKASGRHYGAITCEGC and CRGSKDCVINKHHRNRCQYC. Residues Ser185 and Ser203 each carry the phosphoserine modification. Thr208 bears the Phosphothreonine mark. At Thr210 the chain carries Phosphothreonine; by MAPK1. A Glycyl lysine isopeptide (Lys-Gly) (interchain with G-Cter in SUMO); alternate cross-link involves residue Lys238. Residue Lys238 forms a Glycyl lysine isopeptide (Lys-Gly) (interchain with G-Cter in SUMO2); alternate linkage. In terms of domain architecture, NR LBD spans 333–577; the sequence is EGMEGSPHLI…SVIPHILKME (245 aa). 2 positions are modified to phosphoserine; by PKC: Ser461 and Ser568. Residues 571 to 590 form a required for interaction with NRIP1 region; sequence PHILKMEPADYNSQIIGHSL. Lys575 participates in a covalent cross-link: Glycyl lysine isopeptide (Lys-Gly) (interchain with G-Cter in SUMO2).

This sequence belongs to the nuclear hormone receptor family. NR2 subfamily. Homodimer. Heterodimer; with NR2C2 which is required for chromatin remodeling and for binding to promoter regions such as globin DR1 repeats. Interacts with ESR1; the interaction prevents homodimerization of ESR1 and suppresses its transcriptional activity and cell growth. Interacts with NRIP1 (via its LXXLL motifs); the interaction provides corepressor activity. Interacts with HDAC3 (via the DNA-binding domain); the interaction recruits phosphorylated NR2C1 to PML bodies for sumoylation. Interacts with HDAC4 (via the DNA-binding domain). Interacts with PIAS1; the interaction is required for sumoylation of NR2C1. Interacts with UBE2I; the interaction is required for sumoylation of NR2C1. Interacts with KAT2B; the interaction acts as a corepressor of gene expression. Post-translationally, sumoylation requires both PIAS1 and UBE2I. Sumoylation appears to dissociate NR2C1 from the PML nuclear bodies. Enhances the interaction with NRIP1 but inhibits interaction with KAT2B. In proliferating cells, stimulation by all-trans retinoic acid, activation of MAPK1-mediated phosphorylation and recruitment to PML bodies with subsequent sumoylation, suppresses OCT4 expression. In terms of processing, phosphorylated on several serine and threonine residues. Phosphorylation on Thr-210, stimulated by all-trans retinoic acid (atRA) mediates PML location and sumoylation in proliferating cells which then modulates its association with effector molecules, KAT2B and NRIP1. Phosphorylation on Ser-568 by PKC is important for protein stability and function as activator of RARB. Isoform 1 is highly expressed in the adlumenal compartment of the seminiferous tubule of adult testes (at protein level) and in the eyes of newborn animals. Weakly expressed in other adult organs including the seminal vesicle, prostate, ovary, adrenal gland, heart, thymus, placenta and brain. Expressed during embryonic stages in developing eyes, brain and cartilage primordia (at protein level). Also expressed in the developing spinal motor neurons and in the sympathetic-, parasympathetic- and sensory ganglia of the embryonic PNS. Expressed in the developing neural epithelia of the inner ear, nasal cavity, tongue and retina. At day 16.5, expressed in various tissues including kidney and intestine. In contrast, isoform 2 is widely expressed at a low level throughout the adult testis.

The protein resides in the nucleus. Its subcellular location is the PML body. Its function is as follows. Orphan nuclear receptor. Binds the IR7 element in the promoter of its own gene in an autoregulatory negative feedback mechanism. Primarily repressor of a broad range of genes including ESR1 and RARB. Together with NR2C2, forms the core of the DRED (direct repeat erythroid-definitive) complex that represses embryonic and fetal globin transcription. Binds to hormone response elements (HREs) consisting of two 5'-AGGTCA-3' half site direct repeat consensus sequences. Also activator of OCT4 gene expression. Plays a fundamental role in early embryogenesis and regulates embryonic stem cell proliferation and differentiation. Mediator of retinoic acid-regulated preadipocyte proliferation. The polypeptide is Nuclear receptor subfamily 2 group C member 1 (Mus musculus (Mouse)).